Reading from the N-terminus, the 241-residue chain is Translation initiation factor IF-3 (241 aa).

A compositionally biased stretch (basic and acidic residues) spans 193-203 (AAEKARQKAIQ). Residues 193 to 241 (AAEKARQKAIQEGRAAPAQDDTEDEEIEKLERELEEQDDEDDDEAEATE) form a disordered region. Positions 212–241 (DDTEDEEIEKLERELEEQDDEDDDEAEATE) are enriched in acidic residues.

It belongs to the IF-3 family. As to quaternary structure, monomer.

Its subcellular location is the cytoplasm. In terms of biological role, IF-3 binds to the 30S ribosomal subunit and shifts the equilibrium between 70S ribosomes and their 50S and 30S subunits in favor of the free subunits, thus enhancing the availability of 30S subunits on which protein synthesis initiation begins. This Sorangium cellulosum (strain So ce56) (Polyangium cellulosum (strain So ce56)) protein is Translation initiation factor IF-3.